We begin with the raw amino-acid sequence, 181 residues long: Trafficking protein particle complex subunit 3-like protein (181 aa).

The S-palmitoyl cysteine moiety is linked to residue Cys-68.

Belongs to the TRAPP small subunits family. BET3 subfamily. Homodimer. Component of the multisubunit TRAPP (transport protein particle) complex, which includes at least TRAPPC2, TRAPPC2L, TRAPPC3, TRAPPC3L, TRAPPC4, TRAPPC5, TRAPPC8, TRAPPC9, TRAPPC10, TRAPPC11 and TRAPPC12.

It is found in the golgi apparatus. Its subcellular location is the cis-Golgi network. The protein localises to the endoplasmic reticulum. Its function is as follows. May play a role in vesicular transport from endoplasmic reticulum to Golgi. In Homo sapiens (Human), this protein is Trafficking protein particle complex subunit 3-like protein (TRAPPC3L).